The sequence spans 312 residues: Transcription initiation factor IIB (312 aa).

The TFIIB-type zinc-finger motif lies at 10 to 42 (FVQTCSDCGETQNIVEDYKNGYHVCGRCGCIVG). Residues Cys14, Cys17, Cys34, and Cys37 each coordinate Zn(2+). 2 consecutive repeat copies span residues 120–196 (FCER…LISP) and 213–290 (FCSD…ELLT).

Belongs to the TFIIB family. Associates with TFIID-IIA (DA complex) to form TFIID-IIA-IIB (DAB-complex) which is then recognized by polymerase II.

Its subcellular location is the nucleus. General factor that plays a major role in the activation of eukaryotic genes transcribed by RNA polymerase II. The polypeptide is Transcription initiation factor IIB (Encephalitozoon cuniculi (strain GB-M1) (Microsporidian parasite)).